A 433-amino-acid polypeptide reads, in one-letter code: Pyrimidine-nucleoside phosphorylase (433 aa).

Residue 81–83 (KHS) coordinates phosphate. K(+) is bound by residues Gly88 and Thr90. Residues Thr92, 108 to 110 (KMS), and Thr120 each bind phosphate. Positions 168 and 187 each coordinate substrate. Leu243, Ala246, and Glu255 together coordinate K(+).

It belongs to the thymidine/pyrimidine-nucleoside phosphorylase family. As to quaternary structure, homodimer. Requires K(+) as cofactor.

The catalysed reaction is uridine + phosphate = alpha-D-ribose 1-phosphate + uracil. It catalyses the reaction thymidine + phosphate = 2-deoxy-alpha-D-ribose 1-phosphate + thymine. The enzyme catalyses 2'-deoxyuridine + phosphate = 2-deoxy-alpha-D-ribose 1-phosphate + uracil. Catalyzes phosphorolysis of the pyrimidine nucleosides uridine, thymidine and 2'-deoxyuridine with the formation of the corresponding pyrimidine base and ribose-1-phosphate. The sequence is that of Pyrimidine-nucleoside phosphorylase (pdp) from Staphylococcus epidermidis (strain ATCC 12228 / FDA PCI 1200).